The chain runs to 198 residues: Ribonuclease HII (198 aa).

In terms of domain architecture, RNase H type-2 spans Asn11 to Val198. A divalent metal cation-binding residues include Asp17, Glu18, and Asp109.

This sequence belongs to the RNase HII family. It depends on Mn(2+) as a cofactor. The cofactor is Mg(2+).

The protein resides in the cytoplasm. The catalysed reaction is Endonucleolytic cleavage to 5'-phosphomonoester.. In terms of biological role, endonuclease that specifically degrades the RNA of RNA-DNA hybrids. This chain is Ribonuclease HII, found in Yersinia enterocolitica serotype O:8 / biotype 1B (strain NCTC 13174 / 8081).